A 520-amino-acid chain; its full sequence is Cryptochrome DASH (520 aa).

The region spanning 5-141 (RTVICLLRND…RVQTFWGSTL (137 aa)) is the Photolyase/cryptochrome alpha/beta domain. Residues 479-504 (SRHVNNKSSGPSSSKGRKGSSYTARQ) form a disordered region.

Belongs to the DNA photolyase class-1 family. Requires FAD as cofactor. The cofactor is (6R)-5,10-methylene-5,6,7,8-tetrahydrofolate.

May have a photoreceptor function. Has weak cyclobutyl pyrimidine photolyase activity when expressed in E.coli and when tested in vitro. The sequence is that of Cryptochrome DASH (cry-dash) from Danio rerio (Zebrafish).